Consider the following 490-residue polypeptide: Cardiolipin synthase 1 (490 aa).

2 helical membrane-spanning segments follow: residues 9–29 (ILTI…FVII) and 42–62 (WAWL…YLFL). 2 consecutive PLD phosphodiesterase domains span residues 225 to 252 (MNNR…GDDY) and 403 to 430 (QNGF…DFRS). Residues histidine 230, lysine 232, aspartate 237, histidine 408, lysine 410, and aspartate 415 contribute to the active site.

This sequence belongs to the phospholipase D family. Cardiolipin synthase subfamily.

The protein localises to the cell membrane. The catalysed reaction is 2 a 1,2-diacyl-sn-glycero-3-phospho-(1'-sn-glycerol) = a cardiolipin + glycerol. Its function is as follows. Catalyzes the reversible phosphatidyl group transfer from one phosphatidylglycerol molecule to another to form cardiolipin (CL) (diphosphatidylglycerol) and glycerol. This chain is Cardiolipin synthase 1 (cls1), found in Staphylococcus epidermidis (strain ATCC 12228 / FDA PCI 1200).